A 313-amino-acid polypeptide reads, in one-letter code: Methionyl-tRNA formyltransferase (313 aa).

113–116 (SLLP) provides a ligand contact to (6S)-5,6,7,8-tetrahydrofolate.

Belongs to the Fmt family.

The catalysed reaction is L-methionyl-tRNA(fMet) + (6R)-10-formyltetrahydrofolate = N-formyl-L-methionyl-tRNA(fMet) + (6S)-5,6,7,8-tetrahydrofolate + H(+). Attaches a formyl group to the free amino group of methionyl-tRNA(fMet). The formyl group appears to play a dual role in the initiator identity of N-formylmethionyl-tRNA by promoting its recognition by IF2 and preventing the misappropriation of this tRNA by the elongation apparatus. The protein is Methionyl-tRNA formyltransferase of Francisella tularensis subsp. holarctica (strain FTNF002-00 / FTA).